Consider the following 367-residue polypeptide: Chorismate synthase (367 aa).

R48 contacts NADP(+). Residues R125–S127, N238–A239, G278, K293–S297, and R319 contribute to the FMN site.

Belongs to the chorismate synthase family. As to quaternary structure, homotetramer. FMNH2 is required as a cofactor.

It catalyses the reaction 5-O-(1-carboxyvinyl)-3-phosphoshikimate = chorismate + phosphate. It participates in metabolic intermediate biosynthesis; chorismate biosynthesis; chorismate from D-erythrose 4-phosphate and phosphoenolpyruvate: step 7/7. In terms of biological role, catalyzes the anti-1,4-elimination of the C-3 phosphate and the C-6 proR hydrogen from 5-enolpyruvylshikimate-3-phosphate (EPSP) to yield chorismate, which is the branch point compound that serves as the starting substrate for the three terminal pathways of aromatic amino acid biosynthesis. This reaction introduces a second double bond into the aromatic ring system. The sequence is that of Chorismate synthase from Halorhodospira halophila (strain DSM 244 / SL1) (Ectothiorhodospira halophila (strain DSM 244 / SL1)).